Here is a 124-residue protein sequence, read N- to C-terminus: Fluoride-specific ion channel FluC (124 aa).

4 helical membrane-spanning segments follow: residues 1–21, 38–58, 69–89, and 97–117; these read MIPL…LRFA, TLAV…LFLV, GLIV…LDTV, and VALA…ATWA. Na(+) contacts are provided by Gly-76 and Thr-79.

This sequence belongs to the fluoride channel Fluc/FEX (TC 1.A.43) family.

The protein resides in the cell inner membrane. It catalyses the reaction fluoride(in) = fluoride(out). With respect to regulation, na(+) is not transported, but it plays an essential structural role and its presence is essential for fluoride channel function. Fluoride-specific ion channel. Important for reducing fluoride concentration in the cell, thus reducing its toxicity. The polypeptide is Fluoride-specific ion channel FluC (Pseudomonas fluorescens (strain ATCC BAA-477 / NRRL B-23932 / Pf-5)).